The sequence spans 421 residues: RNA exonuclease 4 (421 aa).

2 disordered regions span residues 1 to 51 (MAKA…ETKK) and 79 to 179 (ENQA…QPPK). Positions 11-24 (SPCSGSLGKTANTP) are enriched in polar residues. Basic residues predominate over residues 25 to 36 (KQKRKQKQRKFW). Basic and acidic residues-rich tracts occupy residues 92-107 (PKKDQKVSEKKTEESV), 140-149 (AAEKSDEVSK), and 161-170 (DTEHQGKKPQ). An Exonuclease domain is found at 234–385 (TVAMDCEMVG…QDAQAAMRLY (152 aa)).

This sequence belongs to the REXO4 family.

The protein resides in the nucleus. This chain is RNA exonuclease 4 (rexo4), found in Xenopus laevis (African clawed frog).